The primary structure comprises 432 residues: Peptidase B (432 aa).

2 residues coordinate Mn(2+): Lys196 and Asp201. Lys208 is a catalytic residue. 3 residues coordinate Mn(2+): Asp219, Asp278, and Glu280. The active site involves Arg282.

The protein belongs to the peptidase M17 family. As to quaternary structure, homohexamer. The cofactor is Mn(2+).

It localises to the cytoplasm. It carries out the reaction Release of an N-terminal amino acid, Xaa, from a peptide or arylamide. Xaa is preferably Glu or Asp but may be other amino acids, including Leu, Met, His, Cys and Gln.. Its function is as follows. Probably plays an important role in intracellular peptide degradation. The polypeptide is Peptidase B (Yersinia pestis bv. Antiqua (strain Antiqua)).